The sequence spans 776 residues: Protein translocase subunit SecA 2 (776 aa).

ATP contacts are provided by residues glutamine 80, 98–102 (GEGKT), and aspartate 486.

The protein belongs to the SecA family. In terms of assembly, monomer and homodimer. Part of the essential Sec protein translocation apparatus which comprises SecA, SecYEG and auxiliary proteins SecDF. Other proteins may also be involved.

It is found in the cell membrane. It localises to the cytoplasm. It carries out the reaction ATP + H2O + cellular proteinSide 1 = ADP + phosphate + cellular proteinSide 2.. In terms of biological role, part of the Sec protein translocase complex. Interacts with the SecYEG preprotein conducting channel. Has a central role in coupling the hydrolysis of ATP to the transfer of proteins into and across the cell membrane, serving as an ATP-driven molecular motor driving the stepwise translocation of polypeptide chains across the membrane. The sequence is that of Protein translocase subunit SecA 2 from Listeria monocytogenes serotype 1/2a (strain 10403S).